The chain runs to 387 residues: 4-hydroxy-3-methylbut-2-en-1-yl diphosphate synthase (flavodoxin) (387 aa).

[4Fe-4S] cluster-binding residues include Cys-280, Cys-283, Cys-315, and Glu-322.

This sequence belongs to the IspG family. Requires [4Fe-4S] cluster as cofactor.

The enzyme catalyses (2E)-4-hydroxy-3-methylbut-2-enyl diphosphate + oxidized [flavodoxin] + H2O + 2 H(+) = 2-C-methyl-D-erythritol 2,4-cyclic diphosphate + reduced [flavodoxin]. The protein operates within isoprenoid biosynthesis; isopentenyl diphosphate biosynthesis via DXP pathway; isopentenyl diphosphate from 1-deoxy-D-xylulose 5-phosphate: step 5/6. Functionally, converts 2C-methyl-D-erythritol 2,4-cyclodiphosphate (ME-2,4cPP) into 1-hydroxy-2-methyl-2-(E)-butenyl 4-diphosphate. The chain is 4-hydroxy-3-methylbut-2-en-1-yl diphosphate synthase (flavodoxin) from Mycobacterium bovis (strain ATCC BAA-935 / AF2122/97).